A 277-amino-acid chain; its full sequence is Adenylate kinase (277 aa).

53–58 (GAGKGT) provides a ligand contact to ATP. The NMP stretch occupies residues 73 to 102 (ATGDMLRAQVAAKTPLGREAKKIMDAGGLV). AMP contacts are provided by residues T74, R79, 100 to 102 (GLV), 129 to 132 (GFPR), and Q136. Residues 170–207 (GRLVHPASGRSYHKIFNPPKAPMTDDATGEPLIQRSDD) form an LID region. ATP is bound by residues R171 and 180 to 181 (SY). Residues R204 and R215 each contribute to the AMP site. Residue Q243 coordinates ATP.

It belongs to the adenylate kinase family. AK2 subfamily. As to quaternary structure, monomer.

Its subcellular location is the cytoplasm. The protein resides in the cytosol. It is found in the mitochondrion intermembrane space. It carries out the reaction AMP + ATP = 2 ADP. In terms of biological role, catalyzes the reversible transfer of the terminal phosphate group between ATP and AMP. Plays an important role in cellular energy homeostasis and in adenine nucleotide metabolism. Adenylate kinase activity is critical for regulation of the phosphate utilization and the AMP de novo biosynthesis pathways. The sequence is that of Adenylate kinase from Phaeosphaeria nodorum (strain SN15 / ATCC MYA-4574 / FGSC 10173) (Glume blotch fungus).